The following is a 248-amino-acid chain: 3-deoxy-manno-octulosonate cytidylyltransferase (248 aa).

This sequence belongs to the KdsB family.

Its subcellular location is the cytoplasm. The enzyme catalyses 3-deoxy-alpha-D-manno-oct-2-ulosonate + CTP = CMP-3-deoxy-beta-D-manno-octulosonate + diphosphate. It functions in the pathway nucleotide-sugar biosynthesis; CMP-3-deoxy-D-manno-octulosonate biosynthesis; CMP-3-deoxy-D-manno-octulosonate from 3-deoxy-D-manno-octulosonate and CTP: step 1/1. It participates in bacterial outer membrane biogenesis; lipopolysaccharide biosynthesis. Its function is as follows. Activates KDO (a required 8-carbon sugar) for incorporation into bacterial lipopolysaccharide in Gram-negative bacteria. This Escherichia coli O127:H6 (strain E2348/69 / EPEC) protein is 3-deoxy-manno-octulosonate cytidylyltransferase.